Here is a 103-residue protein sequence, read N- to C-terminus: Phosphoribosyl-ATP pyrophosphatase (103 aa).

This sequence belongs to the PRA-PH family.

It localises to the cytoplasm. The enzyme catalyses 1-(5-phospho-beta-D-ribosyl)-ATP + H2O = 1-(5-phospho-beta-D-ribosyl)-5'-AMP + diphosphate + H(+). Its pathway is amino-acid biosynthesis; L-histidine biosynthesis; L-histidine from 5-phospho-alpha-D-ribose 1-diphosphate: step 2/9. This chain is Phosphoribosyl-ATP pyrophosphatase, found in Listeria monocytogenes serotype 4b (strain CLIP80459).